The chain runs to 725 residues: Polyribonucleotide nucleotidyltransferase (725 aa).

Asp-506 and Asp-512 together coordinate Mg(2+). The KH domain occupies 571-631 (PLIEQFAIDP…QNIIDACEHI (61 aa)). In terms of domain architecture, S1 motif spans 657–724 (DEVVIGKVER…KKDRIELSSA (68 aa)).

This sequence belongs to the polyribonucleotide nucleotidyltransferase family. It depends on Mg(2+) as a cofactor.

The protein localises to the cytoplasm. It carries out the reaction RNA(n+1) + phosphate = RNA(n) + a ribonucleoside 5'-diphosphate. In terms of biological role, involved in mRNA degradation. Catalyzes the phosphorolysis of single-stranded polyribonucleotides processively in the 3'- to 5'-direction. The sequence is that of Polyribonucleotide nucleotidyltransferase from Aliarcobacter butzleri (strain RM4018) (Arcobacter butzleri).